Reading from the N-terminus, the 181-residue chain is Large ribosomal subunit protein uL5 (181 aa).

Belongs to the universal ribosomal protein uL5 family. Part of the 50S ribosomal subunit; part of the 5S rRNA/L5/L18/L25 subcomplex. Contacts the 5S rRNA and the P site tRNA. Forms a bridge to the 30S subunit in the 70S ribosome.

This is one of the proteins that bind and probably mediate the attachment of the 5S RNA into the large ribosomal subunit, where it forms part of the central protuberance. In the 70S ribosome it contacts protein S13 of the 30S subunit (bridge B1b), connecting the 2 subunits; this bridge is implicated in subunit movement. Contacts the P site tRNA; the 5S rRNA and some of its associated proteins might help stabilize positioning of ribosome-bound tRNAs. In Helicobacter acinonychis (strain Sheeba), this protein is Large ribosomal subunit protein uL5.